We begin with the raw amino-acid sequence, 272 residues long: uncharacterized protein (272 aa).

Glutamate 163 is an active-site residue.

The protein belongs to the glycosyl hydrolase 25 family.

This is an uncharacterized protein from Escherichia coli O157:H7.